Consider the following 238-residue polypeptide: Aliphatic sulfonates import ATP-binding protein SsuB (238 aa).

An ABC transporter domain is found at 7-221 (VSLHQVHQQF…RPGDAAFASL (215 aa)). Residue 39–46 (GRSGSGKT) participates in ATP binding.

Belongs to the ABC transporter superfamily. Aliphatic sulfonates importer (TC 3.A.1.17.2) family. As to quaternary structure, the complex is composed of two ATP-binding proteins (SsuB), two transmembrane proteins (SsuC) and a solute-binding protein (SsuA).

The protein localises to the cell inner membrane. It carries out the reaction ATP + H2O + aliphatic sulfonate-[sulfonate-binding protein]Side 1 = ADP + phosphate + aliphatic sulfonateSide 2 + [sulfonate-binding protein]Side 1.. Functionally, part of the ABC transporter complex SsuABC involved in aliphatic sulfonates import. Responsible for energy coupling to the transport system. This Granulibacter bethesdensis (strain ATCC BAA-1260 / CGDNIH1) protein is Aliphatic sulfonates import ATP-binding protein SsuB.